A 200-amino-acid chain; its full sequence is Protein RISC-INTERACTING CLEARING 3'-5' EXORIBONUCLEASE 1 (200 aa).

3 oligomerization regions span residues 35 to 66 (SKIL…KSEW), 102 to 127 (KFVT…IVIR), and 166 to 173 (DSIQSKWD).

The protein belongs to the RICE family. Homohexamer with DnaQ-like exonuclease fold in a ring-shaped structure with a central cavity. Component of AGO1 and AGO10-centered RNA-induced silencing complexes (RISC). Interacts with and acts as a cofactor of AGO1 and AGO10. As to expression, ubiquitously expressed throughout development in germinating seeds, cotyledons, leaves and roots of young seedlings and adult plants, stems and inflorescence.

Its subcellular location is the cytoplasm. It catalyses the reaction Exonucleolytic cleavage in the 3'- to 5'-direction to yield nucleoside 5'-phosphates.. Functionally, 3'-to-5' exoribonuclease (RNase) specifically targeting single-stranded RNAs. Triggers miRNA accumulation in RNA-induced silencing complex (RISC), composed of miRNAs and AGO proteins, by degrading uridylated cleavage fragments. Required during plant growth and development. In Arabidopsis thaliana (Mouse-ear cress), this protein is Protein RISC-INTERACTING CLEARING 3'-5' EXORIBONUCLEASE 1.